The sequence spans 681 residues: 2-(S-pantetheinyl)-carbapenam-3-carboxylate methyltransferase (681 aa).

A B12-binding domain is found at 1 to 144 (MTVPAARSGR…IERLADHPDY (144 aa)). 7 residues coordinate cob(II)alamin: Asn-18, Ser-72, Tyr-74, Val-75, His-103, Gly-126, and Glu-127. The 226-residue stretch at 192–417 (RDLRFYALWE…RLYVEEPGTP (226 aa)) folds into the Radical SAM core domain. The [4Fe-4S] cluster site is built by Cys-206 and Cys-210. Phe-212 contacts 5'-deoxyadenosine. [4Fe-4S] cluster is bound at residue Cys-213. Residues Asp-214 and Cys-249 each coordinate cob(II)alamin. 5'-deoxyadenosine is bound by residues Gln-312, Glu-349, and Gly-384.

Belongs to the methyltransferase superfamily. [4Fe-4S] cluster serves as cofactor. The cofactor is cob(II)alamin.

The enzyme catalyses (2R,3R,5S)-2-(S-pantetheinyl)-carbapenam-3-carboxylate + AH2 + 2 S-adenosyl-L-methionine = (2R,3R,5S,6R)-6-(methyl)-2-(S-pantetheinyl)-carbapenam-3-carboxylate + 5'-deoxyadenosine + L-methionine + A + S-adenosyl-L-homocysteine + 2 H(+). The catalysed reaction is (2R,3R,5S,6R)-6-(methyl)-2-(S-pantetheinyl)-carbapenam-3-carboxylate + AH2 + 2 S-adenosyl-L-methionine = (2R,3R,5S,6R)-6-(ethyl)-2-(S-pantetheinyl)-carbapenam-3-carboxylate + 5'-deoxyadenosine + L-methionine + A + S-adenosyl-L-homocysteine + 2 H(+). Its pathway is antibiotic biosynthesis. Its function is as follows. Methyltransferase involved in the biosynthesis of the beta-lactam carbapenem antibiotic thienamycin. Catalyzes two consecutive S-adenosyl-L-methionine-dependent methylations to build out the C6-ethyl side chain in a stereocontrolled manner. In vitro can use methyl viologen and NADPH as the iron-sulfur cluster reductants. This is 2-(S-pantetheinyl)-carbapenam-3-carboxylate methyltransferase from Streptantibioticus cattleyicolor (strain ATCC 35852 / DSM 46488 / JCM 4925 / NBRC 14057 / NRRL 8057) (Streptomyces cattleya).